Reading from the N-terminus, the 725-residue chain is Kinesin-like protein KIN-8A (725 aa).

Residues 1 to 32 (MPVSTRSKVMKQERNEQENTNLNLPLRNPHQG) form a disordered region. A Kinesin motor domain is found at 151-481 (RILVFVRLRP…LHWADRAKEI (331 aa)). 243–250 (GATGAGKT) contacts ATP. Coiled-coil stretches lie at residues 499-541 (EGAD…AANN) and 583-617 (ESLK…EHGL). 2 disordered regions span residues 652–672 (GSLR…RFAS) and 691–725 (SPAL…HMKH). A compositionally biased stretch (basic and acidic residues) spans 655-665 (RPKEKEKELKS).

Belongs to the TRAFAC class myosin-kinesin ATPase superfamily. Kinesin family. KIN-8 subfamily.

The protein is Kinesin-like protein KIN-8A of Arabidopsis thaliana (Mouse-ear cress).